Here is a 220-residue protein sequence, read N- to C-terminus: Histone H1B (220 aa).

2 disordered regions span residues 1-45 (MTAT…PSAS) and 99-220 (QVKG…APKK). The span at 28 to 45 (KKVAGGAKAKKPSGPSAS) shows a compositional bias: low complexity. In terms of domain architecture, H15 spans 40 to 113 (SGPSASELIV…GASGSFKLNK (74 aa)). Basic residues-rich tracts occupy residues 122–134 (AAKKKPAAPKAKK), 141–151 (KAPKSPKKPKK), 158–196 (SPKKVKKLAKAAKSPKKPKAVKAKKVAKSPAKKATKPKT), and 204–220 (KVAKPKAAKAKKPAPKK).

This sequence belongs to the histone H1/H5 family.

It localises to the nucleus. The protein resides in the chromosome. Its function is as follows. Histones H1 are necessary for the condensation of nucleosome chains into higher-order structures. This chain is Histone H1B, found in Xenopus laevis (African clawed frog).